The sequence spans 403 residues: Imidazolonepropionase (403 aa).

Positions 68 and 70 each coordinate Fe(3+). The Zn(2+) site is built by His68 and His70. Positions 77, 140, and 173 each coordinate 4-imidazolone-5-propanoate. Residue Tyr140 coordinates N-formimidoyl-L-glutamate. His238 contacts Fe(3+). His238 is a Zn(2+) binding site. Gln241 contributes to the 4-imidazolone-5-propanoate binding site. A Fe(3+)-binding site is contributed by Asp313. A Zn(2+)-binding site is contributed by Asp313. N-formimidoyl-L-glutamate is bound by residues Asn315 and Gly317. Ser318 contacts 4-imidazolone-5-propanoate.

The protein belongs to the metallo-dependent hydrolases superfamily. HutI family. It depends on Zn(2+) as a cofactor. The cofactor is Fe(3+).

It localises to the cytoplasm. It carries out the reaction 4-imidazolone-5-propanoate + H2O = N-formimidoyl-L-glutamate. Its pathway is amino-acid degradation; L-histidine degradation into L-glutamate; N-formimidoyl-L-glutamate from L-histidine: step 3/3. Its function is as follows. Catalyzes the hydrolytic cleavage of the carbon-nitrogen bond in imidazolone-5-propanoate to yield N-formimidoyl-L-glutamate. It is the third step in the universal histidine degradation pathway. This chain is Imidazolonepropionase, found in Hahella chejuensis (strain KCTC 2396).